The sequence spans 444 residues: Trigger factor (444 aa).

The region spanning 166–251 (GDQIVIDFKG…VKAVKAPKAA (86 aa)) is the PPIase FKBP-type domain.

The protein belongs to the FKBP-type PPIase family. Tig subfamily.

Its subcellular location is the cytoplasm. It catalyses the reaction [protein]-peptidylproline (omega=180) = [protein]-peptidylproline (omega=0). Its function is as follows. Involved in protein export. Acts as a chaperone by maintaining the newly synthesized protein in an open conformation. Functions as a peptidyl-prolyl cis-trans isomerase. This Paracoccus denitrificans (strain Pd 1222) protein is Trigger factor.